The chain runs to 445 residues: Type II methyltransferase M.Bpa9945I (445 aa).

One can recognise an SAM-dependent MTase C5-type domain in the interval Met1 to His444. Cys136 is an active-site residue.

The protein belongs to the class I-like SAM-binding methyltransferase superfamily. C5-methyltransferase family.

It is found in the cytoplasm. It catalyses the reaction a 2'-deoxycytidine in DNA + S-adenosyl-L-methionine = a 5-methyl-2'-deoxycytidine in DNA + S-adenosyl-L-homocysteine + H(+). In terms of biological role, component of antiviral defense system DISARM (defense island system associated with restriction-modification), composed of DrmE, DrmA, DrmB, DrmC and DrmMII. DISARM is probably a multi-gene restriction module, this subunit is a DNA methylase. Expression of DISARM in B.subtilis (strain BEST7003) confers resistance to phages Nf, phi29, phi105, phi3T, SPO1, SPR and SPP1. Protection is over 10(7)-fold against phi3T, 10(4)-10(5)-fold against Nf, phi29, phi105 and SPR, 100-fold against SPO1 and 10-fold against SPP1. DISARM does not interfere with phage adsorption, but instead interferes with (phi3T) DNA replication early in its cycle, preventing replication, circularization and lysogeny and probably causes phage DNA degradation (DNA is degraded in SPP1-infected cells). Expression of this methylase alone leads to highly methylated phage, however they are still susceptible to the DISARM system. Functionally, a methylase, recognizes the double-stranded sequence 5'-CCWGG-3', methylates C-2 on both strands. Phage Nf does not have any 5'-CCWGG-3' motifs but is still targeted by the DISARM system. In Bacillus paralicheniformis (strain ATCC 9945a / NCIMB 11709 / CD-2), this protein is Type II methyltransferase M.Bpa9945I.